Consider the following 412-residue polypeptide: NAD-dependent dihydropyrimidine dehydrogenase subunit PreT (412 aa).

Residue Glu-286 coordinates NAD(+).

Belongs to the NADH dehydrogenase family. In terms of assembly, heterotetramer of 2 PreA and 2 PreT subunits.

The enzyme catalyses 5,6-dihydrouracil + NAD(+) = uracil + NADH + H(+). It catalyses the reaction 5,6-dihydrothymine + NAD(+) = thymine + NADH + H(+). In terms of biological role, involved in pyrimidine base degradation. Catalyzes physiologically the reduction of uracil to 5,6-dihydrouracil (DHU) by using NADH as a specific cosubstrate. It also catalyzes the reverse reaction and the reduction of thymine to 5,6-dihydrothymine (DHT). This is NAD-dependent dihydropyrimidine dehydrogenase subunit PreT (preT) from Escherichia coli (strain K12).